A 500-amino-acid chain; its full sequence is Probable cytochrome P450 514A2 (500 aa).

A helical membrane pass occupies residues I4–F24. C446 lines the heme pocket.

It belongs to the cytochrome P450 family. It depends on heme as a cofactor.

The protein localises to the membrane. The sequence is that of Probable cytochrome P450 514A2 (cyp514A2) from Dictyostelium discoideum (Social amoeba).